The primary structure comprises 185 residues: Pro-adrenomedullin (185 aa).

Positions 1–21 are cleaved as a signal peptide; sequence MKLVSVALMYLGSLAFLGADT. An Arginine amide modification is found at Arg-41. The propeptide occupies 45-92; the sequence is ELRMSSSYPTGLADVKAGPAQTLIRPQDMKGASRSPEDSSPDAARIRV. Residues 60-87 are disordered; that stretch reads KAGPAQTLIRPQDMKGASRSPEDSSPDA. Cys-110 and Cys-115 are oxidised to a cystine. Positions 133-185 are disordered; it reads DNVAPRSKISPQGYGRRRRRSLPEAGPGRTLVSSKPQAHGAPAPPSGSAPHFL. Tyr-146 carries the post-translational modification Tyrosine amide. The propeptide at 148–185 is preproAM C-terminal fragment; the sequence is RRRRRSLPEAGPGRTLVSSKPQAHGAPAPPSGSAPHFL.

The protein belongs to the adrenomedullin family. In terms of tissue distribution, highest levels found in pheochromocytoma and adrenal medulla. Also found in lung, ventricle and kidney tissues.

The protein localises to the secreted. In terms of biological role, adrenomedullin/ADM and proadrenomedullin N-20 terminal peptide/PAMP are peptide hormones that act as potent hypotensive and vasodilatator agents. Numerous actions have been reported most related to the physiologic control of fluid and electrolyte homeostasis. In the kidney, ADM is diuretic and natriuretic, and both ADM and PAMP inhibit aldosterone secretion by direct adrenal actions. In pituitary gland, both peptides at physiologically relevant doses inhibit basal ACTH secretion. Both peptides appear to act in brain and pituitary gland to facilitate the loss of plasma volume, actions which complement their hypotensive effects in blood vessels. Its function is as follows. ADM function is mediated by the CALCRL-RAMP2 and CALCRL-RAMP3 receptor complexes with ADM showing the highest potency for the CALCRL-RAMP2 complex. The protein is Pro-adrenomedullin of Homo sapiens (Human).